The following is a 484-amino-acid chain: Mitogen-activated protein kinase SLT2/MPK1 (484 aa).

Positions 23-318 constitute a Protein kinase domain; the sequence is FQLIKEIGHG…VDEALEHPYL (296 aa). Residues 29 to 37 and K54 contribute to the ATP site; that span reads IGHGAYGIV. D153 serves as the catalytic Proton acceptor. At T190 the chain carries Phosphothreonine. Residues 190-192 carry the TXY motif; sequence TEY. Y192 bears the Phosphotyrosine mark. The segment covering 383–392 has biased composition (low complexity); that stretch reads QQQQQQQQQP. Disordered regions lie at residues 383–403 and 426–464; these read QQQQQQQQQPSDVDNGNAAAS and IHSQNLPRHDADFPPRPQESMMEMRPATGNTADIPPQND.

The protein belongs to the protein kinase superfamily. CMGC Ser/Thr protein kinase family. MAP kinase subfamily. Interacts with RLM1. Mg(2+) is required as a cofactor. Dually phosphorylated on Thr-190 and Tyr-192, which activates the enzyme.

It carries out the reaction L-seryl-[protein] + ATP = O-phospho-L-seryl-[protein] + ADP + H(+). The catalysed reaction is L-threonyl-[protein] + ATP = O-phospho-L-threonyl-[protein] + ADP + H(+). Its activity is regulated as follows. Activated by tyrosine and threonine phosphorylation by MKK1 and MKK2. Functionally, serine/threonine protein kinase involved in a signal transduction pathway that plays a role in yeast cell morphogenesis and cell growth. This pathway seems to start by SMP3; then involve the kinase PKC1 that may act the BCK1 kinase that then phosphorylates MKK1 and MKK2 which themselves phosphorylate the SLT2/MPK1 kinase which itself then phosphorylates and activates the transcription factor RLM1. Directly phosphorylates BCY1 upon TOR complex 1 (TORC1) inhibition. The protein is Mitogen-activated protein kinase SLT2/MPK1 (SLT2) of Saccharomyces cerevisiae (strain ATCC 204508 / S288c) (Baker's yeast).